The primary structure comprises 882 residues: Alanine--tRNA ligase (882 aa).

Positions 574, 578, 682, and 686 each coordinate Zn(2+). Residues 853-882 (GGRGGGKGALAQGGGLDPRKAREALPGLLP) form a disordered region. The segment covering 854–868 (GRGGGKGALAQGGGL) has biased composition (gly residues).

The protein belongs to the class-II aminoacyl-tRNA synthetase family. Zn(2+) serves as cofactor.

It localises to the cytoplasm. The catalysed reaction is tRNA(Ala) + L-alanine + ATP = L-alanyl-tRNA(Ala) + AMP + diphosphate. Its function is as follows. Catalyzes the attachment of alanine to tRNA(Ala) in a two-step reaction: alanine is first activated by ATP to form Ala-AMP and then transferred to the acceptor end of tRNA(Ala). Also edits incorrectly charged Ser-tRNA(Ala) and Gly-tRNA(Ala) via its editing domain. This is Alanine--tRNA ligase from Thermus thermophilus (strain ATCC 27634 / DSM 579 / HB8).